Reading from the N-terminus, the 219-residue chain is Probable glutathione S-transferase GSTF1 (219 aa).

The GST N-terminal domain maps to 2-83 (TPVKVFGPAQ…YILRKYKTRE (82 aa)). Glutathione is bound by residues Ser-12, 41-42 (HK), 54-55 (QI), and 67-68 (ES). Residues 91 to 219 (NLREAAMVDV…LAAVMAPQGA (129 aa)) enclose the GST C-terminal domain.

The protein belongs to the GST superfamily. Phi family. In terms of tissue distribution, constitutively expressed in roots.

The catalysed reaction is RX + glutathione = an S-substituted glutathione + a halide anion + H(+). In terms of biological role, conjugation of reduced glutathione to a wide number of exogenous and endogenous hydrophobic electrophiles. The sequence is that of Probable glutathione S-transferase GSTF1 (GSTF1) from Oryza sativa subsp. japonica (Rice).